We begin with the raw amino-acid sequence, 408 residues long: Prenyltransferase criF (408 aa).

Dimethylallyl diphosphate-binding residues include R94, K181, Y183, R248, K250, Y252, Q334, Y336, Y400, and Y404.

It belongs to the tryptophan dimethylallyltransferase family. As to quaternary structure, homodimer.

The enzyme catalyses preechinulin + dimethylallyl diphosphate = tardioxopiperazine B + diphosphate. It carries out the reaction preechinulin + dimethylallyl diphosphate = tardioxopiperazine A + diphosphate. The catalysed reaction is tardioxopiperazine A + dimethylallyl diphosphate = echinulin + diphosphate. It catalyses the reaction tardioxopiperazine A + dimethylallyl diphosphate = variecolorin L + diphosphate. The enzyme catalyses neoechinulin A + dimethylallyl diphosphate = variecolorin G + diphosphate. It carries out the reaction neoechinulin A + dimethylallyl diphosphate = isoechinulin A + diphosphate. The catalysed reaction is isoechinulin A + dimethylallyl diphosphate = dehydroechinulin + diphosphate. It catalyses the reaction neoechinulin B + dimethylallyl diphosphate = isoechinulin B + diphosphate. The protein operates within secondary metabolite biosynthesis. It functions in the pathway alkaloid biosynthesis. Its function is as follows. Prenyltransferase; part of the gene cluster that mediates the biosynthesis of echinulin family alkaloid. The pathway begins with the biosynthesis of the cyclic dipeptide cyclo-L-Trp-L-Ala (cyclo-TA) by the NRPS criC via condensation of L-alanine and L-tryptophan. The prenyltransferase criA then catalyzes the first prenylation step, a reverse prenylation reaction at C2, to yield preechinulin. Preechinulin is the substrate of the cytochrome P450 monooxygenase criE that catalyzes the formation of the double bond between C10 and C11 to produce neoechulin A. The unique prenyltransferase criF functions as a competitive enzyme with criE for preechinulin metabolization and uses preechinulin for effective regiospecific prenylations. Preechinulin is prenylated by criF at C5 or C7. C7-prenylation leads to accumulation of tardioxopiperazine B without further modification by criF. In contrast, the C5-prenylated tardioxopiperazine A can be prenylated again by criF, predominantly at C7 to form echinulin or less frequently at C4 to give variecolorin L. CriF also accepts neoechilunin A to produce varlecolorin G (prenylation at C5) or isoechinulin A (prenylation at C7). CriF further converts isoechinulin A into dehydroechinulin. Moreover, a yet unidentified enzyme can also convert neoechilunin A into neoechilunin B by introducing a double bond between positions C14 and C17 and thus provides a further substrate to criF for C5 and C7 prenylation. This Aspergillus cristatus (Chinese Fuzhuan brick tea-fermentation fungus) protein is Prenyltransferase criF.